Here is a 331-residue protein sequence, read N- to C-terminus: Major ferric iron-binding protein (331 aa).

The N-terminal stretch at 1–22 (MKTSIRYALLAAALTAATPALA) is a signal peptide. 4 residues coordinate Fe cation: histidine 31, glutamate 79, tyrosine 217, and tyrosine 218.

The protein belongs to the bacterial solute-binding protein 1 family.

It localises to the periplasm. In terms of biological role, this protein may be a central component in the iron-acquisition system. The sequence is that of Major ferric iron-binding protein (fbpA) from Neisseria meningitidis serogroup A / serotype 4A (strain DSM 15465 / Z2491).